An 872-amino-acid chain; its full sequence is Alanine--tRNA ligase (872 aa).

Zn(2+)-binding residues include histidine 563, histidine 567, cysteine 665, and histidine 669.

This sequence belongs to the class-II aminoacyl-tRNA synthetase family. Requires Zn(2+) as cofactor.

Its subcellular location is the cytoplasm. It catalyses the reaction tRNA(Ala) + L-alanine + ATP = L-alanyl-tRNA(Ala) + AMP + diphosphate. Its function is as follows. Catalyzes the attachment of alanine to tRNA(Ala) in a two-step reaction: alanine is first activated by ATP to form Ala-AMP and then transferred to the acceptor end of tRNA(Ala). Also edits incorrectly charged Ser-tRNA(Ala) and Gly-tRNA(Ala) via its editing domain. The protein is Alanine--tRNA ligase of Bacteroides thetaiotaomicron (strain ATCC 29148 / DSM 2079 / JCM 5827 / CCUG 10774 / NCTC 10582 / VPI-5482 / E50).